The primary structure comprises 732 residues: Polyphosphate kinase (732 aa).

Residue Asn61 coordinates ATP. Residues Arg417 and Arg447 each contribute to the Mg(2+) site. Residue His477 is the Phosphohistidine intermediate of the active site. ATP is bound by residues Tyr510, Arg606, and His634. The disordered stretch occupies residues 699–718 (DGTYRQRQPAPGEAERGTHS).

It belongs to the polyphosphate kinase 1 (PPK1) family. The cofactor is Mg(2+). Post-translationally, an intermediate of this reaction is the autophosphorylated ppk in which a phosphate is covalently linked to a histidine residue through a N-P bond.

The catalysed reaction is [phosphate](n) + ATP = [phosphate](n+1) + ADP. Catalyzes the reversible transfer of the terminal phosphate of ATP to form a long-chain polyphosphate (polyP). This chain is Polyphosphate kinase, found in Thermosynechococcus vestitus (strain NIES-2133 / IAM M-273 / BP-1).